The following is a 476-amino-acid chain: RNA-binding protein 45 (476 aa).

A compositionally biased stretch (gly residues) spans 1-14 (MDDAGGLGGSGGFR). A disordered region spans residues 1–20 (MDDAGGLGGSGGFRPGVDSL). RRM domains are found at residues 26 to 106 (SRIF…IAQS) and 121 to 192 (TRIF…LAEP). Lysine 34 is covalently cross-linked (Glycyl lysine isopeptide (Lys-Gly) (interchain with G-Cter in SUMO2)). Positions 192–212 (PKNKVSGSPEQDDYSSGRQEA) are disordered. Residues 196–209 (VSGSPEQDDYSSGR) show a composition bias toward polar residues. A phosphoserine mark is found at serine 199 and serine 464. The 73-residue stretch at 392–464 (ERLFVVFNPH…VRLKVMLADS (73 aa)) folds into the RRM 3 domain.

It localises to the cytoplasm. Its subcellular location is the nucleus. Its function is as follows. RNA-binding protein with binding specificity for poly(C). May play an important role in neural development. In Mus musculus (Mouse), this protein is RNA-binding protein 45 (Rbm45).